The primary structure comprises 112 residues: Ig kappa chain V-II region MOPC 167 (112 aa).

A framework-1 region spans residues 1–23 (DIVITQDELSNPVTSGESVSISC). An intrachain disulfide couples C23 to C93. The complementarity-determining-1 stretch occupies residues 24 to 39 (RSSKSLLYKDGKTYLN). Positions 40–54 (WFLQRPGQSPQLLIS) are framework-2. Positions 55-61 (LMSTRAS) are complementarity-determining-2. The interval 62–93 (GVSDRFSGSGSRTDFTLEISRVKAEDVGVYYC) is framework-3. The tract at residues 94–102 (QQLVEYPLT) is complementarity-determining-3. The tract at residues 103 to 112 (FGAGTKLELK) is framework-4.

The polypeptide is Ig kappa chain V-II region MOPC 167 (Mus musculus (Mouse)).